The chain runs to 321 residues: Mas-related G-protein coupled receptor member H (321 aa).

The Extracellular portion of the chain corresponds to 1-35 (MEPLATTLCPQECTQTTRNETPNETTWSSEHVTKY). Asparagine 23 carries an N-linked (GlcNAc...) asparagine glycan. The helical transmembrane segment at 36-56 (TYISISLVICSLGLVGNGLLI) threads the bilayer. Residues 57-71 (WFLIFCIKRKPFTIY) lie on the Cytoplasmic side of the membrane. Residues 72–92 (ILHLAFADFMVLLCSSIIQLV) traverse the membrane as a helical segment. Residues 93 to 102 (NTFHIYDSTL) are Extracellular-facing. A helical transmembrane segment spans residues 103-126 (VSYAVLFMIFGYNTGLHLLTAISV). The Cytoplasmic portion of the chain corresponds to 127–147 (ERCLSVLYPIWYHCRRPKHQS). Residues 148 to 168 (TVACTLLWALSVLVSGLENFF) traverse the membrane as a helical segment. At 169-188 (CILEVKPQFPECRYVYIFSC) the chain is on the extracellular side. The helical transmembrane segment at 189–209 (TLTFLVFVPLMVFSNLILFIQ) threads the bilayer. At 210–225 (VCCNLKPRQPAKLYVI) the chain is on the cytoplasmic side. The helical transmembrane segment at 226 to 246 (IMATVILFLVFAMPMKVLLII) threads the bilayer. A topological domain (extracellular) is located at residue glycine 247. A helical transmembrane segment spans residues 248–271 (YYSNSTDASVWKSLPYLNMLSTIN). Residues 272-320 (CSINPIVYFVVGSLRRKRSRKSLKEALQKVFEEKPVVASRENEVQFSLP) are Cytoplasmic-facing.

It belongs to the G-protein coupled receptor 1 family. Mas subfamily.

The protein resides in the cell membrane. Its function is as follows. Orphan receptor. May regulate nociceptor function and/or development, including the sensation or modulation of pain. In Rattus norvegicus (Rat), this protein is Mas-related G-protein coupled receptor member H (Mrgprh).